The following is a 293-amino-acid chain: N-acetylmannosamine kinase (293 aa).

ATP is bound by residues 5-12 (AIDIGGTK) and 133-140 (GVGGGLVI). Zn(2+) is bound by residues H157, C167, C169, and C174.

The protein belongs to the ROK (NagC/XylR) family. NanK subfamily. In terms of assembly, homodimer.

It catalyses the reaction an N-acyl-D-mannosamine + ATP = an N-acyl-D-mannosamine 6-phosphate + ADP + H(+). It participates in amino-sugar metabolism; N-acetylneuraminate degradation; D-fructose 6-phosphate from N-acetylneuraminate: step 2/5. Catalyzes the phosphorylation of N-acetylmannosamine (ManNAc) to ManNAc-6-P. This chain is N-acetylmannosamine kinase, found in Vibrio vulnificus (strain YJ016).